The sequence spans 199 residues: TATA-box-binding protein (199 aa).

Repeat copies occupy residues 10 to 86 (IENI…VKLL) and 101 to 177 (IQNI…YNQL).

The protein belongs to the TBP family.

Functionally, general factor that plays a role in the activation of archaeal genes transcribed by RNA polymerase. Binds specifically to the TATA box promoter element which lies close to the position of transcription initiation. In Pyrobaculum calidifontis (strain DSM 21063 / JCM 11548 / VA1), this protein is TATA-box-binding protein.